The chain runs to 361 residues: Pyruvate dehydrogenase E1 component subunit beta, mitochondrial (361 aa).

The N-terminal 27 residues, 1 to 27 (MAVNGCMRLLRNGLTSACALEQSVRRL), are a transit peptide targeting the mitochondrion. E90 contributes to the thiamine diphosphate binding site. I143, A191, V192, D194, and N196 together coordinate K(+).

As to quaternary structure, heterotetramer of two PDHA1 and two PDHB subunits. The heterotetramer interacts with DLAT, and is part of the multimeric pyruvate dehydrogenase complex that contains multiple copies of pyruvate dehydrogenase (E1), dihydrolipoamide acetyltransferase (DLAT, E2) and lipoamide dehydrogenase (DLD, E3). Requires thiamine diphosphate as cofactor.

It localises to the mitochondrion matrix. The catalysed reaction is N(6)-[(R)-lipoyl]-L-lysyl-[protein] + pyruvate + H(+) = N(6)-[(R)-S(8)-acetyldihydrolipoyl]-L-lysyl-[protein] + CO2. Functionally, the pyruvate dehydrogenase complex catalyzes the overall conversion of pyruvate to acetyl-CoA and CO(2), and thereby links the glycolytic pathway to the tricarboxylic cycle. The polypeptide is Pyruvate dehydrogenase E1 component subunit beta, mitochondrial (Ascaris suum (Pig roundworm)).